Reading from the N-terminus, the 1052-residue chain is Eukaryotic translation initiation factor 3 subunit A (1052 aa).

Residues 92–121 (LKKFIELAEKKVTEAQAKADEIQSSLESAA) adopt a coiled-coil conformation. The region spanning 339 to 523 (MTKAASFVLL…GVLTFDTDVF (185 aa)) is the PCI domain. Residues 580-906 (EARLQAKRAA…AEARRAARRT (327 aa)) are a coiled coil. Composition is skewed to basic and acidic residues over residues 617–632 (AATD…EETR) and 794–901 (KEVS…EARR). Disordered stretches follow at residues 617–646 (AATD…AEKQ) and 794–1052 (KEVS…QGGQ). Composition is skewed to low complexity over residues 905–927 (RTGG…TAPR) and 948–964 (KEAA…AAPE). Over residues 1013 to 1028 (GSSQPPSRTQTPGSSS) the composition is skewed to polar residues.

Belongs to the eIF-3 subunit A family. As to quaternary structure, component of the eukaryotic translation initiation factor 3 (eIF-3) complex.

It is found in the cytoplasm. Functionally, RNA-binding component of the eukaryotic translation initiation factor 3 (eIF-3) complex, which is involved in protein synthesis of a specialized repertoire of mRNAs and, together with other initiation factors, stimulates binding of mRNA and methionyl-tRNAi to the 40S ribosome. The eIF-3 complex specifically targets and initiates translation of a subset of mRNAs involved in cell proliferation. This Aspergillus niger (strain ATCC MYA-4892 / CBS 513.88 / FGSC A1513) protein is Eukaryotic translation initiation factor 3 subunit A (tif32).